The primary structure comprises 491 residues: Nicotinamide phosphoribosyltransferase (491 aa).

An N-acetylmethionine modification is found at methionine 1. Tyrosine 188 carries the phosphotyrosine modification. Arginine 196 is a diphosphate binding site. A beta-nicotinamide D-ribonucleotide-binding site is contributed by aspartate 219. The diphosphate site is built by histidine 247 and arginine 311. Beta-nicotinamide D-ribonucleotide contacts are provided by residues 311–313 (RPD), 353–354 (GD), glycine 384, and arginine 392. Residue serine 472 is modified to Phosphoserine.

The protein belongs to the NAPRTase family. As to quaternary structure, homodimer. Ubiquitously expressed in lymphoid and non-lymphoid tissues.

It is found in the nucleus. Its subcellular location is the cytoplasm. The protein localises to the secreted. It carries out the reaction beta-nicotinamide D-ribonucleotide + diphosphate = 5-phospho-alpha-D-ribose 1-diphosphate + nicotinamide + H(+). Its pathway is cofactor biosynthesis; NAD(+) biosynthesis; nicotinamide D-ribonucleotide from 5-phospho-alpha-D-ribose 1-diphosphate and nicotinamide: step 1/1. Functionally, the secreted form behaves both as a cytokine with immunomodulating properties and an adipokine with anti-diabetic properties, it has no enzymatic activity, partly because of lack of activation by ATP, which has a low level in extracellular space and plasma. Catalyzes the condensation of nicotinamide with 5-phosphoribosyl-1-pyrophosphate to yield nicotinamide mononucleotide, an intermediate in the biosynthesis of NAD. It is the rate limiting component in the mammalian NAD biosynthesis pathway. Plays a role in the modulation of circadian clock function. NAMPT-dependent oscillatory production of NAD regulates oscillation of clock target gene expression by releasing the core clock component: CLOCK-BMAL1 heterodimer from NAD-dependent SIRT1-mediated suppression. The protein is Nicotinamide phosphoribosyltransferase (Nampt) of Mus musculus (Mouse).